The primary structure comprises 354 residues: Selenide, water dikinase (354 aa).

The active site involves C23. ATP-binding positions include K26 and 54–56 (TAD). A Mg(2+)-binding site is contributed by D57. ATP contacts are provided by residues D74, D97, and 145–147 (GHS). D97 serves as a coordination point for Mg(2+). D233 is a binding site for Mg(2+).

This sequence belongs to the selenophosphate synthase 1 family. Class I subfamily. As to quaternary structure, homodimer. Mg(2+) is required as a cofactor.

The enzyme catalyses hydrogenselenide + ATP + H2O = selenophosphate + AMP + phosphate + 2 H(+). In terms of biological role, synthesizes selenophosphate from selenide and ATP. The sequence is that of Selenide, water dikinase from Paraburkholderia xenovorans (strain LB400).